A 693-amino-acid polypeptide reads, in one-letter code: Iron-sulfur clusters transporter atm1, mitochondrial (693 aa).

The N-terminal 28 residues, 1 to 28 (MLERCPWKLISSPRNIPARSFLNSRGTY), are a transit peptide targeting the mitochondrion. Residues 29–118 (LVLRKSNILP…PKGKTNLKVR (90 aa)) are Mitochondrial matrix-facing. The chain crosses the membrane as a helical span at residues 119–140 (VVSALALLVAAKILNVQVPFYF). Residues 119-409 (VVSALALLVA…LGSVYREMRQ (291 aa)) form the ABC transmembrane type-1 domain. At 141–163 (KSIIDTMNTTLVQEVGALWSTVG) the chain is on the mitochondrial intermembrane side. A helical transmembrane segment spans residues 164-187 (AVVLGYGFARIFSTVFQELRNSVF). At 188–236 (AIVSQSAIRSVSSNVYQHLLNLDMNFHLSKQTGSITRAMDRGTKGISFI) the chain is on the mitochondrial matrix side. Residues 237–260 (LSSMVLHIIPITLEIAMVSGILTY) form a helical membrane-spanning segment. Residue Lys261 is a topological domain, mitochondrial intermembrane. A helical transmembrane segment spans residues 262–282 (YGPSFSAIAATTVALYALFTV). Over 283–348 (RTTSWRTVFR…ANVKVASSLA (66 aa)) the chain is Mitochondrial matrix. Glutathione is bound by residues 288–292 (RTVFR) and 351–354 (NSGQ). Residues 349 to 367 (FLNSGQAIIFSTALTLMMY) form a helical membrane-spanning segment. Topologically, residues 368 to 382 (MGCRGIVTSNLTVGD) are mitochondrial intermembrane. Residues 383–404 (LVMINQLVFQLSIPLNFLGSVY) traverse the membrane as a helical segment. Gly401 contributes to the glutathione binding site. Over 405 to 693 (REMRQAFTDM…FGESNKSGDA (289 aa)) the chain is Mitochondrial matrix. The region spanning 443 to 679 (IQFDNVHFSY…NSVYTSMWHS (237 aa)) is the ABC transporter domain. ATP is bound by residues Tyr452 and 476-487 (GASGCGKSTILR).

It belongs to the ABC transporter superfamily. ABCB family. Heavy Metal importer (TC 3.A.1.210) subfamily. In terms of assembly, homodimer.

It localises to the mitochondrion inner membrane. Functionally, performs an essential function in the generation of cytoplasmic iron-sulfur proteins by mediating the ATP-dependent export of Fe/S cluster precursors synthesized by nfs1 and other mitochondrial proteins. Hydrolyzes ATP. Binds glutathione and may function by transporting a glutathione-conjugated iron-sulfur compound. This is Iron-sulfur clusters transporter atm1, mitochondrial from Schizosaccharomyces pombe (strain 972 / ATCC 24843) (Fission yeast).